The primary structure comprises 206 residues: Pyridoxine/pyridoxamine 5'-phosphate oxidase (206 aa).

FMN is bound by residues 53 to 58 (RMVLLK), 68 to 69 (YT), lysine 75, and glutamine 97. Lysine 58 is a binding site for substrate. 3 residues coordinate substrate: tyrosine 115, arginine 119, and serine 123. FMN contacts are provided by residues 132–133 (QS) and tryptophan 177. Position 183–185 (183–185 (RLH)) interacts with substrate. Arginine 187 contributes to the FMN binding site.

This sequence belongs to the pyridoxamine 5'-phosphate oxidase family. Homodimer. FMN serves as cofactor.

The catalysed reaction is pyridoxamine 5'-phosphate + O2 + H2O = pyridoxal 5'-phosphate + H2O2 + NH4(+). The enzyme catalyses pyridoxine 5'-phosphate + O2 = pyridoxal 5'-phosphate + H2O2. It functions in the pathway cofactor metabolism; pyridoxal 5'-phosphate salvage; pyridoxal 5'-phosphate from pyridoxamine 5'-phosphate: step 1/1. The protein operates within cofactor metabolism; pyridoxal 5'-phosphate salvage; pyridoxal 5'-phosphate from pyridoxine 5'-phosphate: step 1/1. In terms of biological role, catalyzes the oxidation of either pyridoxine 5'-phosphate (PNP) or pyridoxamine 5'-phosphate (PMP) into pyridoxal 5'-phosphate (PLP). The polypeptide is Pyridoxine/pyridoxamine 5'-phosphate oxidase (Rhizobium johnstonii (strain DSM 114642 / LMG 32736 / 3841) (Rhizobium leguminosarum bv. viciae)).